Reading from the N-terminus, the 665-residue chain is tRNA 5-methylaminomethyl-2-thiouridine biosynthesis bifunctional protein MnmC (665 aa).

Residues 1-243 (MSQTSLHHAR…KREMLAGERA (243 aa)) form a tRNA (mnm(5)s(2)U34)-methyltransferase region. Residues 268-665 (IGGGIASAMT…RKLLKGKPLQ (398 aa)) form an FAD-dependent cmnm(5)s(2)U34 oxidoreductase region.

In the N-terminal section; belongs to the methyltransferase superfamily. tRNA (mnm(5)s(2)U34)-methyltransferase family. It in the C-terminal section; belongs to the DAO family. Requires FAD as cofactor.

The protein localises to the cytoplasm. The enzyme catalyses 5-aminomethyl-2-thiouridine(34) in tRNA + S-adenosyl-L-methionine = 5-methylaminomethyl-2-thiouridine(34) in tRNA + S-adenosyl-L-homocysteine + H(+). In terms of biological role, catalyzes the last two steps in the biosynthesis of 5-methylaminomethyl-2-thiouridine (mnm(5)s(2)U) at the wobble position (U34) in tRNA. Catalyzes the FAD-dependent demodification of cmnm(5)s(2)U34 to nm(5)s(2)U34, followed by the transfer of a methyl group from S-adenosyl-L-methionine to nm(5)s(2)U34, to form mnm(5)s(2)U34. The chain is tRNA 5-methylaminomethyl-2-thiouridine biosynthesis bifunctional protein MnmC from Aeromonas hydrophila subsp. hydrophila (strain ATCC 7966 / DSM 30187 / BCRC 13018 / CCUG 14551 / JCM 1027 / KCTC 2358 / NCIMB 9240 / NCTC 8049).